The sequence spans 736 residues: Prospero homeobox protein 1 (736 aa).

The segment covering 103-135 (KNGGTEPSFQASGLSSTGSEVHQEDVCSNSSRD) has biased composition (polar residues). The segment at 103–146 (KNGGTEPSFQASGLSSTGSEVHQEDVCSNSSRDSPQECLSPFGR) is disordered. The Nuclear localization signal signature appears at 163 to 168 (RAKRAR). Disordered regions lie at residues 180–220 (PRVA…QQQS), 261–301 (YDST…EMCE), 319–344 (EIGE…HPEG), 445–465 (NSSD…SLHQ), and 499–518 (PSAS…DLTR). A compositionally biased stretch (acidic residues) spans 264–274 (TDSENDEDGNL). A compositionally biased stretch (basic and acidic residues) spans 319 to 335 (EIGENKPKREGPKEKDQ). The segment covering 450-460 (PASAPPAGGHH) has biased composition (low complexity). Residues 505-518 (GKERASPESLDLTR) are compositionally biased toward basic and acidic residues. Residues 576–634 (QEGLSPNHLKKAKLMFFYTRYPSSNMLKTYFSDVKFNRCITSQLIKWFSNFREFYYIQM) form the Prospero-type homeo domain. A homeo-Prospero region spans residues 576-734 (QEGLSPNHLK…KSPNCLQELL (159 aa)). The 100-residue stretch at 635–734 (EKYARQAIND…KSPNCLQELL (100 aa)) folds into the Prospero domain.

It belongs to the Prospero homeodomain family. As to expression, expressed most actively in the developing lens and midgut and at lower levels in the developing brain, heart, muscle and retina.

The protein resides in the nucleus. Functionally, transcription factor which may be involved in developmental processes such as cell fate determination, gene transcriptional regulation and progenitor cell regulation in a number of organs. May be essential in the development and function of the eye. May play a role in the regulation of the circadian rhythm by repressing the expression of clock genes. This chain is Prospero homeobox protein 1 (PROX1), found in Gallus gallus (Chicken).